We begin with the raw amino-acid sequence, 443 residues long: MSEMTPREIVSELNKHIIGQDNAKRSVAIALRNRWRRMQLNEELRHEVTPKNILMIGPTGVGKTEIARRLAKLANAPFIKVEATKFTEVGYVGKEVDSIIRDLTDSAIKMVRVQSIEKNRYRAEEMAEERILDALIPPAKNNWGQAEQQQEPSAARQAFRKKLREGQLDDKEIEINLAAAPMGVEIMAPPGMEEMTSQLQSMFQNLGGQKQKPRKLKIKDAMKLLIEEEAAKLVNPEELKQEAIDAVEQHGIVFIDEIDKICKRGESSGPDVSREGVQRDLLPLVEGCTVSTKHGMVKTDHILFIASGAFQVAKPSDLIPELQGRLPIRVELKALTTEDFERILTEPNASVTVQYKALMATEGVDIEFTESGIKRIAEAAWQVNETTENIGARRLHTVLERLMEDISYDASDLNGQSITIDAEYVSKHLDALVADEDLSRFIL.

ATP is bound by residues Ile18, 60–65 (GVGKTE), Asp256, Glu321, and Arg393.

Belongs to the ClpX chaperone family. HslU subfamily. In terms of assembly, a double ring-shaped homohexamer of HslV is capped on each side by a ring-shaped HslU homohexamer. The assembly of the HslU/HslV complex is dependent on binding of ATP.

The protein localises to the cytoplasm. Its function is as follows. ATPase subunit of a proteasome-like degradation complex; this subunit has chaperone activity. The binding of ATP and its subsequent hydrolysis by HslU are essential for unfolding of protein substrates subsequently hydrolyzed by HslV. HslU recognizes the N-terminal part of its protein substrates and unfolds these before they are guided to HslV for hydrolysis. The polypeptide is ATP-dependent protease ATPase subunit HslU (Citrobacter koseri (strain ATCC BAA-895 / CDC 4225-83 / SGSC4696)).